Consider the following 511-residue polypeptide: GMP synthase [glutamine-hydrolyzing] (511 aa).

Residues 5 to 195 (AILVLDFGSQ…VFKICQAQIN (191 aa)) enclose the Glutamine amidotransferase type-1 domain. Cys-82 acts as the Nucleophile in catalysis. Residues His-169 and Glu-171 contribute to the active site. The GMPS ATP-PPase domain occupies 196-386 (WSLEGNLETI…LGIKKESLYR (191 aa)). Residue 223–229 (SGGTDSL) participates in ATP binding.

Homodimer.

The catalysed reaction is XMP + L-glutamine + ATP + H2O = GMP + L-glutamate + AMP + diphosphate + 2 H(+). It functions in the pathway purine metabolism; GMP biosynthesis; GMP from XMP (L-Gln route): step 1/1. In terms of biological role, catalyzes the synthesis of GMP from XMP. This Borreliella burgdorferi (strain N40) (Borrelia burgdorferi) protein is GMP synthase [glutamine-hydrolyzing] (guaA).